We begin with the raw amino-acid sequence, 205 residues long: MEVNVINIESQNIGKIDLNPLIFSVNYRPDILKMVVEWQLSKRRIGAHKTKTIGDVSGTTAKPYRQKHTGRARQGSLRSPQFRGGAVIFGPVVRTHAYSLNKKVRNLGLKVALSLKNSCNKLLILDSIDVNFVKTAQVLRFIKNFEHQSFLIIGKDYNKGMMYSCKNLHNVTLLKQIGTNVFDILRHDCVILTVDTVKYLEDRLL.

The segment at 56–76 (VSGTTAKPYRQKHTGRARQGS) is disordered.

This sequence belongs to the universal ribosomal protein uL4 family. As to quaternary structure, part of the 50S ribosomal subunit.

Functionally, one of the primary rRNA binding proteins, this protein initially binds near the 5'-end of the 23S rRNA. It is important during the early stages of 50S assembly. It makes multiple contacts with different domains of the 23S rRNA in the assembled 50S subunit and ribosome. Forms part of the polypeptide exit tunnel. This Ehrlichia ruminantium (strain Welgevonden) protein is Large ribosomal subunit protein uL4.